Here is a 477-residue protein sequence, read N- to C-terminus: Diacylglycerol O-acyltransferase 1-2 (477 aa).

A disordered region spans residues methionine 1–glutamine 48. A compositionally biased stretch (basic and acidic residues) spans glycine 12–arginine 21. Over residues arginine 25–glutamine 40 the composition is skewed to low complexity. Transmembrane regions (helical) follow at residues histidine 79–isoleucine 99, tryptophan 123–glutamate 143, valine 155–isoleucine 175, valine 182–phenylalanine 202, asparagine 230–tyrosine 250, glycine 263–isoleucine 283, and valine 319–leucine 339. The FYXDWWN motif motif lies at phenylalanine 346–asparagine 352. 3 consecutive transmembrane segments (helical) span residues glycine 387–valine 407, cysteine 409–leucine 429, and valine 442–leucine 462. The active site involves histidine 401.

Belongs to the membrane-bound acyltransferase family. Sterol o-acyltransferase subfamily.

It localises to the endoplasmic reticulum membrane. It catalyses the reaction an acyl-CoA + a 1,2-diacyl-sn-glycerol = a triacyl-sn-glycerol + CoA. The protein operates within glycerolipid metabolism; triacylglycerol biosynthesis. Its function is as follows. Involved in triacylglycerol (TAG) synthesis. Catalyzes the acylation of the sn-3 hydroxy group of sn-1,2-diacylglycerol using acyl-CoA. The chain is Diacylglycerol O-acyltransferase 1-2 from Oryza sativa subsp. japonica (Rice).